The chain runs to 276 residues: NAD-capped RNA hydrolase NudC (276 aa).

R82 lines the substrate pocket. Zn(2+) is bound by residues C112 and C115. Residue E125 coordinates substrate. Residues C130 and C133 each coordinate Zn(2+). Y138 serves as a coordination point for substrate. The 124-residue stretch at 139 to 262 (PRISPSMIVL…SIARYLIDVY (124 aa)) folds into the Nudix hydrolase domain. The a divalent metal cation site is built by A172, E188, and E192. The Nudix box signature appears at 173-194 (GFAEPGESAEDCLIREVREEVQ). Substrate is bound at residue 206 to 213 (QCWPFPHS). A divalent metal cation is bound at residue E233. A255 contributes to the substrate binding site.

This sequence belongs to the Nudix hydrolase family. NudC subfamily. As to quaternary structure, homodimer. The cofactor is Mg(2+). Mn(2+) serves as cofactor. Zn(2+) is required as a cofactor.

The catalysed reaction is a 5'-end NAD(+)-phospho-ribonucleoside in mRNA + H2O = a 5'-end phospho-adenosine-phospho-ribonucleoside in mRNA + beta-nicotinamide D-ribonucleotide + 2 H(+). The enzyme catalyses NAD(+) + H2O = beta-nicotinamide D-ribonucleotide + AMP + 2 H(+). It carries out the reaction NADH + H2O = reduced beta-nicotinamide D-ribonucleotide + AMP + 2 H(+). Functionally, mRNA decapping enzyme that specifically removes the nicotinamide adenine dinucleotide (NAD) cap from a subset of mRNAs by hydrolyzing the diphosphate linkage to produce nicotinamide mononucleotide (NMN) and 5' monophosphate mRNA. The NAD-cap is present at the 5'-end of some mRNAs and stabilizes RNA against 5'-processing. Has preference for mRNAs with a 5'-end purine. Catalyzes the hydrolysis of a broad range of dinucleotide pyrophosphates. This is NAD-capped RNA hydrolase NudC from Pseudomonas fluorescens (strain Pf0-1).